Consider the following 681-residue polypeptide: Transcriptional regulator prz1 (681 aa).

Positions methionine 1–aspartate 15 are enriched in basic and acidic residues. Disordered stretches follow at residues methionine 1 to aspartate 29, asparagine 66 to proline 96, serine 340 to phenylalanine 372, proline 410 to leucine 433, and lysine 520 to glutamate 563. 2 stretches are compositionally biased toward polar residues: residues asparagine 66–serine 86 and serine 340–glutamate 358. Residues proline 416 to leucine 428 show a composition bias toward low complexity. The segment covering serine 528–glycine 549 has biased composition (polar residues). Serine 543 and serine 546 each carry phosphoserine. The segment covering asparagine 550–lysine 559 has biased composition (low complexity). C2H2-type zinc fingers lie at residues tyrosine 570–histidine 594 and phenylalanine 600–histidine 622. The C2H2-type 3; degenerate zinc finger occupies phenylalanine 628–glutamate 650. Residues arginine 662 to lysine 681 form a disordered region.

It belongs to the EGR C2H2-type zinc-finger protein family. Post-translationally, phosphorylated. Dephosphorylated by calcineurin which leads to rapid translocation from the cytoplasm to the nucleus.

The protein localises to the nucleus. The protein resides in the cytoplasm. Functionally, involved in the regulation of calcium ion homeostasis. Binds to the calcineurin-dependent response element. Transcriptionally regulates pmc1. The chain is Transcriptional regulator prz1 (prz1) from Schizosaccharomyces pombe (strain 972 / ATCC 24843) (Fission yeast).